Consider the following 409-residue polypeptide: Argininosuccinate synthase (409 aa).

Residues 10–18 (AYSGGLDTS) and A37 contribute to the ATP site. Residues Y90 and S95 each contribute to the L-citrulline site. An ATP-binding site is contributed by G120. 3 residues coordinate L-aspartate: T122, N126, and D127. N126 is an L-citrulline binding site. Positions 130, 182, 191, 267, and 279 each coordinate L-citrulline.

Belongs to the argininosuccinate synthase family. Type 1 subfamily. In terms of assembly, homotetramer.

Its subcellular location is the cytoplasm. It carries out the reaction L-citrulline + L-aspartate + ATP = 2-(N(omega)-L-arginino)succinate + AMP + diphosphate + H(+). It participates in amino-acid biosynthesis; L-arginine biosynthesis; L-arginine from L-ornithine and carbamoyl phosphate: step 2/3. The chain is Argininosuccinate synthase from Thiobacillus denitrificans (strain ATCC 25259 / T1).